Reading from the N-terminus, the 542-residue chain is Chondroitin sulfate N-acetylgalactosaminyltransferase 2 (542 aa).

Over Met1–Arg11 the chain is Cytoplasmic. The chain crosses the membrane as a helical; Signal-anchor for type II membrane protein span at residues Thr12–Leu32. Topologically, residues Glu33–Gly542 are lumenal. Asn41 carries N-linked (GlcNAc...) asparagine glycosylation. A coiled-coil region spans residues Ala59 to Asn105. Asn333 carries an N-linked (GlcNAc...) asparagine glycan. 2 residues coordinate a divalent metal cation: Asp369 and His486.

The protein belongs to the chondroitin N-acetylgalactosaminyltransferase family. As to expression, ubiquitous.

Its subcellular location is the golgi apparatus. The protein localises to the golgi stack membrane. It catalyses the reaction 3-O-(beta-D-GlcA-(1-&gt;3)-beta-D-Gal-(1-&gt;3)-beta-D-Gal-(1-&gt;4)-beta-D-Xyl)-L-seryl-[protein] + UDP-N-acetyl-alpha-D-galactosamine = 3-O-(beta-D-GalNAc-(1-&gt;4)-beta-D-GlcA-(1-&gt;3)-beta-D-Gal-(1-&gt;3)-beta-D-Gal-(1-&gt;4)-beta-D-Xyl)-L-seryl-[protein] + UDP + H(+). In terms of biological role, transfers 1,4-N-acetylgalactosamine (GalNAc) from UDP-GalNAc to the non-reducing end of glucuronic acid (GlcUA). Required for addition of the first GalNAc to the core tetrasaccharide linker and for elongation of chondroitin chains. This Homo sapiens (Human) protein is Chondroitin sulfate N-acetylgalactosaminyltransferase 2 (CSGALNACT2).